A 1021-amino-acid chain; its full sequence is Sodium/potassium-transporting ATPase subunit alpha-1 (1021 aa).

The propeptide occupies 1–5 (MGKGV). Residues 1–11 (MGKGVGRDKYE) are compositionally biased toward basic and acidic residues. The segment at 1 to 36 (MGKGVGRDKYEPAAVSEHGDKKKAKKERDMDELKKE) is disordered. The Cytoplasmic segment spans residues 6–85 (GRDKYEPAAV…NALTPPPTTP (80 aa)). Lysine 9 is modified (N6-acetyllysine). Position 10 is a phosphotyrosine (tyrosine 10). A Phosphoserine; by PKC modification is found at serine 16. At lysine 21 the chain carries N6-acetyllysine. Over residues 26 to 36 (KERDMDELKKE) the composition is skewed to basic and acidic residues. Serine 38 and serine 45 each carry phosphoserine. The tract at residues 80–82 (PPP) is phosphoinositide-3 kinase binding. The helical transmembrane segment at 86 to 106 (EWVKFCRQLFGGFSMLLWIGA) threads the bilayer. Topologically, residues 107–129 (VLCFLAYGIQAATEEEPQNDNLY) are extracellular. A helical transmembrane segment spans residues 130-150 (LGVVLSAVVIITGCFSYYQEA). The Cytoplasmic portion of the chain corresponds to 151–286 (KSSKIMESFK…GGQTPIAAEI (136 aa)). Serine 226 bears the Phosphoserine mark. Tyrosine 258 is subject to Phosphotyrosine. A helical transmembrane segment spans residues 287 to 306 (EHFIHIITGVAVFLGVSFFI). Residues 307-318 (LSLILEYTWLEA) are Extracellular-facing. The chain crosses the membrane as a helical span at residues 319–336 (VIFLIGIIVANVPEGLLA). Residues 337 to 770 (TVTVCLTLTA…EEGRLIFDNL (434 aa)) lie on the Cytoplasmic side of the membrane. Aspartate 374 functions as the 4-aspartylphosphate intermediate in the catalytic mechanism. Residues serine 450 and serine 482 each carry the phosphoserine modification. ATP is bound at residue lysine 485. Residue tyrosine 540 is modified to Phosphotyrosine. The mediates interaction with SCN7A stretch occupies residues 594–715 (RAAVPDAVGK…QGAIVAVTGD (122 aa)). Residue serine 666 is modified to Phosphoserine. Aspartate 715 and aspartate 719 together coordinate Mg(2+). The helical transmembrane segment at 771–790 (KKSIAYTLTSNIPEITPFLI) threads the bilayer. Residues 791–800 (FIIANIPLPL) are Extracellular-facing. The chain crosses the membrane as a helical span at residues 801–821 (GTVTILCIDLGTDMVPAISLA). Topologically, residues 822–841 (YEQAESDIMKRQPRNPQTDK) are cytoplasmic. Residues 842–864 (LVNERLISMAYGQIGMIQALGGF) form a helical membrane-spanning segment. The Extracellular segment spans residues 865 to 916 (FTYFVIMAENGFLPNHLLGIRVTWDDRWINDVEDSYGQQWTYEQRKIVEFTC). A helical membrane pass occupies residues 917–936 (HTAFFVSIVVVQWADLVICK). At 937-949 (TRRNSVFQQGMKN) the chain is on the cytoplasmic side. Serine 941 carries the post-translational modification Phosphoserine; by PKA. Residues 950-968 (KILIFGLFEETALAAFLSY) traverse the membrane as a helical segment. The Extracellular segment spans residues 969 to 983 (CPGMGVALRMYPLKP). Residues 984 to 1004 (TWWFCAFPYSLLIFVYDEVRK) form a helical membrane-spanning segment. The Cytoplasmic segment spans residues 1005-1021 (LIIRRRPGGWVEKETYY).

Belongs to the cation transport ATPase (P-type) (TC 3.A.3) family. Type IIC subfamily. The sodium/potassium-transporting ATPase is composed of a catalytic alpha subunit, an auxiliary non-catalytic beta subunit and an additional regulatory subunit. Interacts with regulatory subunit FXYD1. Interacts with regulatory subunit FXYD3. Interacts with SIK1. Interacts with SLC35G1 and STIM1. Interacts with CLN3; this interaction regulates the sodium/potassium-transporting ATPase complex localization at the plasma membrane. Interacts with SCN7A; activates ATP1A1 P-type sodium:potassium-exchanging transporter activity which indirectly signals to nearby neurons to regulate sodium homeostasis. Post-translationally, phosphorylation on Tyr-10 modulates pumping activity. Phosphorylation of Ser-941 by PKA modulates the response of ATP1A1 to PKC. Dephosphorylation by protein phosphatase 2A (PP2A) following increases in intracellular sodium, leading to increase catalytic activity.

The protein resides in the cell membrane. It localises to the basolateral cell membrane. The protein localises to the sarcolemma. It is found in the cell projection. Its subcellular location is the axon. The protein resides in the melanosome. The enzyme catalyses K(+)(out) + Na(+)(in) + ATP + H2O = K(+)(in) + Na(+)(out) + ADP + phosphate + H(+). With respect to regulation, specifically inhibited by cardiac glycosides such as digoxin or ouabain. Its function is as follows. This is the catalytic component of the active enzyme, which catalyzes the hydrolysis of ATP coupled with the exchange of sodium and potassium ions across the plasma membrane. This action creates the electrochemical gradient of sodium and potassium ions, providing the energy for active transport of various nutrients. Could also be part of an osmosensory signaling pathway that senses body-fluid sodium levels and controls salt intake behavior as well as voluntary water intake to regulate sodium homeostasis. The chain is Sodium/potassium-transporting ATPase subunit alpha-1 (ATP1A1) from Ovis aries (Sheep).